Here is a 241-residue protein sequence, read N- to C-terminus: Tumor necrosis factor ligand superfamily member 13 (241 aa).

The propeptide occupies 1 to 95; it reads MPASSPGHMG…KDGAKSRRRR (95 aa). The region spanning 107–241 is the THD domain; the sequence is SVLHLVPVNI…HGTFLGFVKL (135 aa). A glycan (N-linked (GlcNAc...) asparagine) is linked at Asn115. A disulfide bond links Cys187 and Cys202.

Belongs to the tumor necrosis factor family. In terms of assembly, homotrimer. In terms of processing, the soluble form derives from the membrane form by proteolytic processing.

The protein resides in the secreted. Functionally, cytokine that binds to TNFRSF13B/TACI and to TNFRSF17/BCMA. Plays a role in the regulation of tumor cell growth. May be involved in monocyte/macrophage-mediated immunological processes. The sequence is that of Tumor necrosis factor ligand superfamily member 13 (Tnfsf13) from Mus musculus (Mouse).